A 237-amino-acid polypeptide reads, in one-letter code: Ribonuclease PH (237 aa).

Residues Arg86 and 124–126 each bind phosphate; that span reads GTR.

This sequence belongs to the RNase PH family. Homohexameric ring arranged as a trimer of dimers.

The catalysed reaction is tRNA(n+1) + phosphate = tRNA(n) + a ribonucleoside 5'-diphosphate. Its function is as follows. Phosphorolytic 3'-5' exoribonuclease that plays an important role in tRNA 3'-end maturation. Removes nucleotide residues following the 3'-CCA terminus of tRNAs; can also add nucleotides to the ends of RNA molecules by using nucleoside diphosphates as substrates, but this may not be physiologically important. Probably plays a role in initiation of 16S rRNA degradation (leading to ribosome degradation) during starvation. The protein is Ribonuclease PH of Methylobacterium radiotolerans (strain ATCC 27329 / DSM 1819 / JCM 2831 / NBRC 15690 / NCIMB 10815 / 0-1).